The following is a 366-amino-acid chain: MSKFKSLLLLFGTLILLSGCSNIEIFNAKGPVASSQKFLILYSIVFMLVICFVVLGMFAIFIYKYSYNKNAESGKMHHNAIIETIWFVIPIIIVAALAIPTVKTLYDYEKPPKSEKDPMVVYAVSAGYKWFFAYPDEHIETVNTLTIPKDRPVVFKLQAMDTMTSFWIPQLGGQKYAMTGMTMNWTLEASQTGTFRGRNSNFNGEGFSRQTFKVNAVSQKDYDKWVKEVKGKKTLDQDTFDKQLLPSTPNKALEFNGTHMAFVDPAADPEYIFYAYKRFNFELKDPNFTSEENMFKDVSDKPLIPARKAQITNANYKRHGMKLMILGNDEPYNNEFKKDESKNAKEMKKISKDAQDQDNDDHGGGH.

The N-terminal stretch at 1 to 19 is a signal peptide; that stretch reads MSKFKSLLLLFGTLILLSG. Cys-20 is lipidated: N-palmitoyl cysteine. The S-diacylglycerol cysteine moiety is linked to residue Cys-20. The next 2 membrane-spanning stretches (helical) occupy residues 38-58 and 80-100; these read FLIL…LGMF and AIIE…LAIP. Residues 330-366 are disordered; it reads EPYNNEFKKDESKNAKEMKKISKDAQDQDNDDHGGGH. The segment covering 335–366 has biased composition (basic and acidic residues); sequence EFKKDESKNAKEMKKISKDAQDQDNDDHGGGH.

This sequence belongs to the cytochrome c oxidase subunit 2 family.

It localises to the cell membrane. The enzyme catalyses 2 a quinol + O2 = 2 a quinone + 2 H2O. Its function is as follows. Catalyzes quinol oxidation with the concomitant reduction of oxygen to water. Subunit II transfers the electrons from a quinol to the binuclear center of the catalytic subunit I. This is Probable quinol oxidase subunit 2 (qoxA) from Staphylococcus aureus (strain USA300).